The sequence spans 869 residues: Ribonucleoside-diphosphate reductase large chain 2 (869 aa).

The region spanning 1-92 (MYVIKRDGRK…ISNLHKQTTK (92 aa)) is the ATP-cone domain. Residues 5–6 (KR), 11–17 (EPVQFDK), T53, and D57 each bind ATP. GDP is bound by residues S202 and S217. A disulfide bond links C218 and C443. DTTP is bound by residues 226-228 (DSI), K243, R256, and 263-264 (AG). At S227 the chain carries Phosphoserine. K387 participates in a covalent cross-link: Glycyl lysine isopeptide (Lys-Gly) (interchain with G-Cter in ubiquitin). GDP is bound at residue N426. The active-site Proton acceptor is the N426. The Cysteine radical intermediate role is filled by C428. Residues E430 and 608-611 (TAST) contribute to the GDP site. Catalysis depends on E430, which acts as the Proton acceptor. The tract at residues 793-843 (SALTESSDNEKDASPVPSEQSSVSSAMSNVKLEDSVAPAVPTETIKEDSDE) is disordered. Phosphoserine is present on residues S806, S827, and S868. Low complexity predominate over residues 806–820 (SPVPSEQSSVSSAMS).

This sequence belongs to the ribonucleoside diphosphate reductase large chain family. As to quaternary structure, heterotetramer of two large (R1) and two small (R2) subunits. S.cerevisiae has two different R1 subunits (RNR1 and RNR3) and two different R2 subunits (RNR2 and RNR4). The functional form of the small subunits is a RNR2-RNR4 heterodimer, where RNR2 provides the iron-radical center and RNR4 is required for proper folding of RNR2 and assembly with the large subunits. Under normal growth conditions, the active form of the large subunits is a homodimer of the constitutively expressed RNR1. In damaged cells or cells arrested for DNA synthesis, the reductase consists of multiple species because of the association of the small subunits (RNR2-RNR4) with either the RNR1 homodimer or a heterodimer of RNR1 and the damage-inducible RNR3.

The protein localises to the cytoplasm. It catalyses the reaction a 2'-deoxyribonucleoside 5'-diphosphate + [thioredoxin]-disulfide + H2O = a ribonucleoside 5'-diphosphate + [thioredoxin]-dithiol. Its activity is regulated as follows. Under complex allosteric control mediated by deoxynucleoside triphosphates and ATP binding to separate specificity and activation sites on the large subunit. The type of nucleotide bound at the specificity site determines substrate preference. It seems probable that ATP makes the enzyme reduce CDP and UDP, dGTP favors ADP reduction and dTTP favors GDP reduction. Stimulated by ATP and inhibited by dATP binding to the activity site. Functionally, provides the precursors necessary for DNA synthesis. Catalyzes the biosynthesis of deoxyribonucleotides from the corresponding ribonucleotides. The chain is Ribonucleoside-diphosphate reductase large chain 2 (RNR3) from Saccharomyces cerevisiae (strain ATCC 204508 / S288c) (Baker's yeast).